Here is a 195-residue protein sequence, read N- to C-terminus: Pyruvoyl-dependent arginine decarboxylase AaxB (195 aa).

Ser53 is modified (pyruvic acid (Ser)).

This sequence belongs to the pyruvoyl-dependent arginine decarboxylase family. Trimer of an alpha-beta dimer. Pyruvate serves as cofactor.

The protein localises to the cytoplasm. The catalysed reaction is L-arginine + H(+) = agmatine + CO2. Functionally, part of the AaxABC system, catalyzes the decarboxylation of L-arginine. The arginine uptake by the bacterium in the macrophage may be a virulence factor against the host innate immune response. This chain is Pyruvoyl-dependent arginine decarboxylase AaxB (aaxB), found in Chlamydia trachomatis serovar D (strain ATCC VR-885 / DSM 19411 / UW-3/Cx).